Consider the following 247-residue polypeptide: Large ribosomal subunit protein uL3 (247 aa).

Disordered stretches follow at residues Arg-124–Met-145 and Val-218–Glu-247. Residues Val-222–Asn-241 show a composition bias toward basic and acidic residues.

Belongs to the universal ribosomal protein uL3 family. Part of the 50S ribosomal subunit. Forms a cluster with proteins L14 and L19.

Its function is as follows. One of the primary rRNA binding proteins, it binds directly near the 3'-end of the 23S rRNA, where it nucleates assembly of the 50S subunit. This is Large ribosomal subunit protein uL3 from Oenococcus oeni (strain ATCC BAA-331 / PSU-1).